Consider the following 195-residue polypeptide: PE-PGRS family protein PE_PGRS61 (195 aa).

The protein belongs to the mycobacterial PE family. PGRS subfamily. Interacts with human TLR2.

Its subcellular location is the secreted. It localises to the cell wall. It is found in the cell surface. Its activity is regulated as follows. Binding of Ca(2+) to PE_PGRS61 induces conformational changes and increases affinity for TLR2. Functionally, mediates Ca(2+)-dependent up-regulation of the anti-inflammatory cytokine IL-10. The sequence is that of PE-PGRS family protein PE_PGRS61 from Mycobacterium tuberculosis (strain ATCC 25618 / H37Rv).